We begin with the raw amino-acid sequence, 477 residues long: MQVTETLNEGLKREIKVVVPAKDLEAKLAERLETARDRAKINGFRPGKVPAAHLRKMYGKSFMAEIVNEILNDSSRSLLAERNEKSATQPEVIMSEDEKEAEQVLDGKADFVFSLNYEVLPAIEVKDFSKIAVTREVVDISDEEVDDQVKRIASSTRAFETKKGKAENEDRVTIDYLGKLDGEPFEGGADNDAQLVLGSGQFIPGFEEQLVGVKAGDEKVITVTFPAEYGAAHLAGKEATFDITVKEVAKPNELVLDDETAKKLGIESLERLRQVVREQIESQYGQITRQKVKRQILDALDGDYQFATPQKLVDAEFNNIWQQINFDLQQAGRTFEDEETTEEAAREEYRKLAERRVRLGLVLSEIGEKAGVEVSEEELQRAVYDQVRRYPGQEKEIYEFLRKTPDAVANLRAPIFEEKVVDHLLANISVTDKKVSKEELTAEDEDAASEAKPAKKAAPKKKAAPKKKADEGKSEEA.

The 86-residue stretch at 169–254 (EDRVTIDYLG…VKEVAKPNEL (86 aa)) folds into the PPIase FKBP-type domain. Residues 435–477 (VSKEELTAEDEDAASEAKPAKKAAPKKKAAPKKKADEGKSEEA) are disordered. Positions 454-466 (AKKAAPKKKAAPK) are enriched in basic residues. Basic and acidic residues predominate over residues 467-477 (KKADEGKSEEA).

This sequence belongs to the FKBP-type PPIase family. Tig subfamily.

Its subcellular location is the cytoplasm. It catalyses the reaction [protein]-peptidylproline (omega=180) = [protein]-peptidylproline (omega=0). In terms of biological role, involved in protein export. Acts as a chaperone by maintaining the newly synthesized protein in an open conformation. Functions as a peptidyl-prolyl cis-trans isomerase. In Brucella anthropi (strain ATCC 49188 / DSM 6882 / CCUG 24695 / JCM 21032 / LMG 3331 / NBRC 15819 / NCTC 12168 / Alc 37) (Ochrobactrum anthropi), this protein is Trigger factor.